Here is a 337-residue protein sequence, read N- to C-terminus: Holliday junction branch migration complex subunit RuvB (337 aa).

Positions 4–186 (ADRLIAADNP…FGIVQRLEYY (183 aa)) are large ATPase domain (RuvB-L). ATP-binding positions include Ile25, Arg26, Gly67, Lys70, Thr71, Thr72, 133 to 135 (EDY), Arg176, Tyr186, and Arg223. Mg(2+) is bound at residue Thr71. The segment at 187-257 (KVDDLQYIVQ…IADKALNMLD (71 aa)) is small ATPAse domain (RuvB-S). A head domain (RuvB-H) region spans residues 260–337 (VCGFDYMDRK…LHFGIDRPDK (78 aa)). DNA is bound by residues Arg315 and Arg320.

This sequence belongs to the RuvB family. Homohexamer. Forms an RuvA(8)-RuvB(12)-Holliday junction (HJ) complex. HJ DNA is sandwiched between 2 RuvA tetramers; dsDNA enters through RuvA and exits via RuvB. An RuvB hexamer assembles on each DNA strand where it exits the tetramer. Each RuvB hexamer is contacted by two RuvA subunits (via domain III) on 2 adjacent RuvB subunits; this complex drives branch migration. In the full resolvosome a probable DNA-RuvA(4)-RuvB(12)-RuvC(2) complex forms which resolves the HJ.

The protein localises to the cytoplasm. The catalysed reaction is ATP + H2O = ADP + phosphate + H(+). In terms of biological role, the RuvA-RuvB-RuvC complex processes Holliday junction (HJ) DNA during genetic recombination and DNA repair, while the RuvA-RuvB complex plays an important role in the rescue of blocked DNA replication forks via replication fork reversal (RFR). RuvA specifically binds to HJ cruciform DNA, conferring on it an open structure. The RuvB hexamer acts as an ATP-dependent pump, pulling dsDNA into and through the RuvAB complex. RuvB forms 2 homohexamers on either side of HJ DNA bound by 1 or 2 RuvA tetramers; 4 subunits per hexamer contact DNA at a time. Coordinated motions by a converter formed by DNA-disengaged RuvB subunits stimulates ATP hydrolysis and nucleotide exchange. Immobilization of the converter enables RuvB to convert the ATP-contained energy into a lever motion, pulling 2 nucleotides of DNA out of the RuvA tetramer per ATP hydrolyzed, thus driving DNA branch migration. The RuvB motors rotate together with the DNA substrate, which together with the progressing nucleotide cycle form the mechanistic basis for DNA recombination by continuous HJ branch migration. Branch migration allows RuvC to scan DNA until it finds its consensus sequence, where it cleaves and resolves cruciform DNA. The sequence is that of Holliday junction branch migration complex subunit RuvB from Aliivibrio salmonicida (strain LFI1238) (Vibrio salmonicida (strain LFI1238)).